Here is a 61-residue protein sequence, read N- to C-terminus: Small ribosomal subunit protein uS14 (61 aa).

A compositionally biased stretch (basic residues) spans 1–14; it reads MAKTSQKVRNHRPA. The interval 1–20 is disordered; sequence MAKTSQKVRNHRPAKFSSRE. 4 residues coordinate Zn(2+): Cys24, Cys27, Cys40, and Cys43.

Belongs to the universal ribosomal protein uS14 family. Zinc-binding uS14 subfamily. As to quaternary structure, part of the 30S ribosomal subunit. Contacts proteins S3 and S10. It depends on Zn(2+) as a cofactor.

Functionally, binds 16S rRNA, required for the assembly of 30S particles and may also be responsible for determining the conformation of the 16S rRNA at the A site. This chain is Small ribosomal subunit protein uS14, found in Lactobacillus delbrueckii subsp. bulgaricus (strain ATCC 11842 / DSM 20081 / BCRC 10696 / JCM 1002 / NBRC 13953 / NCIMB 11778 / NCTC 12712 / WDCM 00102 / Lb 14).